Reading from the N-terminus, the 364-residue chain is Phosphoserine aminotransferase (364 aa).

R46 serves as a coordination point for L-glutamate. Pyridoxal 5'-phosphate contacts are provided by residues 80 to 81, W106, T157, D176, and Q199; that span reads AR. K200 carries the N6-(pyridoxal phosphate)lysine modification. Residue 241–242 coordinates pyridoxal 5'-phosphate; the sequence is NT.

The protein belongs to the class-V pyridoxal-phosphate-dependent aminotransferase family. SerC subfamily. In terms of assembly, homodimer. Pyridoxal 5'-phosphate serves as cofactor.

It localises to the cytoplasm. It carries out the reaction O-phospho-L-serine + 2-oxoglutarate = 3-phosphooxypyruvate + L-glutamate. The enzyme catalyses 4-(phosphooxy)-L-threonine + 2-oxoglutarate = (R)-3-hydroxy-2-oxo-4-phosphooxybutanoate + L-glutamate. It functions in the pathway amino-acid biosynthesis; L-serine biosynthesis; L-serine from 3-phospho-D-glycerate: step 2/3. Its pathway is cofactor biosynthesis; pyridoxine 5'-phosphate biosynthesis; pyridoxine 5'-phosphate from D-erythrose 4-phosphate: step 3/5. In terms of biological role, catalyzes the reversible conversion of 3-phosphohydroxypyruvate to phosphoserine and of 3-hydroxy-2-oxo-4-phosphonooxybutanoate to phosphohydroxythreonine. In Vibrio parahaemolyticus serotype O3:K6 (strain RIMD 2210633), this protein is Phosphoserine aminotransferase.